A 273-amino-acid polypeptide reads, in one-letter code: Exosome complex component MTR3 (273 aa).

Residues M1–L36 are disordered.

It belongs to the RNase PH family. As to quaternary structure, component of the RNA exosome core complex (Exo-9), composed of EXOSC1, EXOSC2, EXOSC3, EXOSC4, EXOSC5, EXOSC6, EXOSC7, EXOSC8 and EXOSC9; within the complex interacts with EXOSC1, EXOSC7 and EXOSC8. The catalytically inactive RNA exosome core complex (Exo-9) associates with the catalytic subunit EXOSC10/RRP6. Exo-9 may associate with DIS3 to form the nucleolar exosome complex, or DIS3L to form the cytoplasmic exosome complex. Exo-9 is formed by a hexameric base ring consisting of the heterodimers EXOSC4-EXOSC9, EXOSC5-EXOSC8 and EXOSC6-EXOSC7, and a cap ring consisting of EXOSC1, EXOSC2 and EXOSC3. The RNA exosome complex associates with cofactors EXOSC10/RRP6, C1D/RRP47, MPHOSPH6/MPP6 and MTREX/MTR4.

It is found in the cytoplasm. Its subcellular location is the nucleus. It localises to the nucleolus. Its function is as follows. Non-catalytic component of the RNA exosome complex which has 3'-&gt;5' exoribonuclease activity and participates in a multitude of cellular RNA processing and degradation events. In the nucleus, the RNA exosome complex is involved in proper maturation of stable RNA species such as rRNA, snRNA and snoRNA, in the elimination of RNA processing by-products and non-coding 'pervasive' transcripts, such as antisense RNA species and promoter-upstream transcripts (PROMPTs), and of mRNAs with processing defects, thereby limiting or excluding their export to the cytoplasm. The RNA exosome may be involved in Ig class switch recombination (CSR) and/or Ig variable region somatic hypermutation (SHM) by targeting AICDA deamination activity to transcribed dsDNA substrates. In the cytoplasm, the RNA exosome complex is involved in general mRNA turnover and specifically degrades inherently unstable mRNAs containing AU-rich elements (AREs) within their 3' untranslated regions, and in RNA surveillance pathways, preventing translation of aberrant mRNAs. It seems to be involved in degradation of histone mRNA. The catalytic inactive RNA exosome core complex of 9 subunits (Exo-9) is proposed to play a pivotal role in the binding and presentation of RNA for ribonucleolysis, and to serve as a scaffold for the association with catalytic subunits and accessory proteins or complexes. The chain is Exosome complex component MTR3 (Exosc6) from Mus musculus (Mouse).